A 316-amino-acid polypeptide reads, in one-letter code: tRNA dimethylallyltransferase (316 aa).

14–21 (GPTAVGKT) contributes to the ATP binding site. 16-21 (TAVGKT) contacts substrate. The interaction with substrate tRNA stretch occupies residues 39 to 42 (DSMQ).

Belongs to the IPP transferase family. As to quaternary structure, monomer. Requires Mg(2+) as cofactor.

It catalyses the reaction adenosine(37) in tRNA + dimethylallyl diphosphate = N(6)-dimethylallyladenosine(37) in tRNA + diphosphate. In terms of biological role, catalyzes the transfer of a dimethylallyl group onto the adenine at position 37 in tRNAs that read codons beginning with uridine, leading to the formation of N6-(dimethylallyl)adenosine (i(6)A). This Bacillus cytotoxicus (strain DSM 22905 / CIP 110041 / 391-98 / NVH 391-98) protein is tRNA dimethylallyltransferase.